Here is a 257-residue protein sequence, read N- to C-terminus: tRNA pseudouridine synthase A (257 aa).

The Nucleophile role is filled by aspartate 53. Residue tyrosine 111 participates in substrate binding.

It belongs to the tRNA pseudouridine synthase TruA family. Homodimer.

The enzyme catalyses uridine(38/39/40) in tRNA = pseudouridine(38/39/40) in tRNA. Its function is as follows. Formation of pseudouridine at positions 38, 39 and 40 in the anticodon stem and loop of transfer RNAs. The protein is tRNA pseudouridine synthase A of Xanthomonas campestris pv. campestris (strain 8004).